The primary structure comprises 310 residues: Vomeronasal type-1 receptor 53 (310 aa).

Residues 1 to 20 (MNKANLLHTDINLKITLFSE) are Extracellular-facing. The chain crosses the membrane as a helical span at residues 21 to 41 (VSVGISANSILIFAHLCMLLG). The Cytoplasmic portion of the chain corresponds to 42-50 (ENRPKPIDL). A helical transmembrane segment spans residues 51–71 (YIAFFSLTQLMLLITMGLIAV). The Extracellular portion of the chain corresponds to 72–93 (DMFMPWGRWDSTTCQSLIYLHR). Cys-85 and Cys-172 are oxidised to a cystine. Residues 94–114 (LLRGLTLSATCLLNVLWTITL) form a helical membrane-spanning segment. Residues 115-134 (SPRSSCLTKFKHKSLQHISC) lie on the Cytoplasmic side of the membrane. A helical transmembrane segment spans residues 135–155 (AFLFLCVLYMSFNSHLFISII). The Extracellular segment spans residues 156–183 (AYPNLTLENFMYVTQSCSLIPLSYFRKS). Asn-159 carries an N-linked (GlcNAc...) asparagine glycan. The chain crosses the membrane as a helical span at residues 184-204 (MFSIPMAIREALLIGLMALSG). Topologically, residues 205 to 238 (GYMVAHLWRHKKQAQHLHRTSLSSKASPEQRATR) are cytoplasmic. The chain crosses the membrane as a helical span at residues 239 to 259 (TIMLLMSFFVVLYILDLVIFH). The Extracellular portion of the chain corresponds to 260–268 (SRMKFKDGS). The chain crosses the membrane as a helical span at residues 269–289 (ILYGVQIIVSHSYATVSPFVF). The Cytoplasmic segment spans residues 290 to 310 (ICTEKRITNFLRSMCGRIVNI).

It belongs to the G-protein coupled receptor 1 family.

Its subcellular location is the cell membrane. Functionally, putative pheromone receptor implicated in the regulation of social and reproductive behavior. The protein is Vomeronasal type-1 receptor 53 (Vmn1r53) of Mus musculus (Mouse).